Consider the following 178-residue polypeptide: MCTSGQIIGSLLVLSVLEIGLGVSSVAVGAVSFSLALREHKPQLGDSSPVWSGVCFLLCGICGILCAKKKSGLVMILFSACCICGLIGGILNFQFLRAVTKKTSSLYPLHLASMSLACIGIGGCTLSSWLTCRLASYEQRRMFSEREHSLHHSHEMAEKEITDNMSNGGPQLIFNGRV.

A run of 4 helical transmembrane segments spans residues 11-31, 47-67, 73-93, and 106-126; these read LLVLSVLEIGLGVSSVAVGAV, SSPVWSGVCFLLCGICGILCA, LVMILFSACCICGLIGGILNF, and LYPLHLASMSLACIGIGGCTL.

As to expression, expression is significantly decreased in lung cancer cells compared to normal lung tissue (at protein level).

Its subcellular location is the cytoplasm. The protein resides in the membrane. Functionally, acts as a tumor suppressor in lung cancer. Inhibits tumor cell growth by inhibiting cell proliferation and migration and promoting cell apoptosis. Inhibits metastasis of lung cancer by suppressing beta-catenin expression in the Wnt/beta-catenin signaling pathway. In Homo sapiens (Human), this protein is Transmembrane protein 196 (TMEM196).